The following is a 292-amino-acid chain: Phosphotriesterase homology protein (292 aa).

Zn(2+) contacts are provided by H12, H14, and E125. 148 to 149 (HN) lines the beta-D-glucose pocket. H158 contributes to the Zn(2+) binding site. The beta-D-glucose site is built by G176, D178, and R181. Zn(2+) is bound by residues H186 and D243. The beta-D-glucose site is built by D280 and R284.

This sequence belongs to the metallo-dependent hydrolases superfamily. Phosphotriesterase family. As to quaternary structure, monomer. It depends on Zn(2+) as a cofactor.

With respect to regulation, activity is higher in the enzyme containing Mn(2+) than that containing Zn(2+). Its function is as follows. Catalyzes the hydrolysis of phosphorylated glyceryl acetates in which the presence of a phosphate group is required for the enzymatic hydrolysis. Hydrolyzes a dibutyl glycerol derivative suggesting it acts on phosphoglycerol substrates with a butyrate leaving group. Also active with aromatic acetates and propionates. No activity with various sugar phosphates, with various nitrophenylphosphate or nitrophenylphosphonate derivatives, or with phosphorylated or non-phosphorylated sugar lactones tested. Does not hydrolyze non-phosphorylated carboxyesters with long chain leaving groups. No general esterase, aminopeptidase, sulfatase, phosphatase, carbonic anhydrase, phosphodiesterase, and phosphotriesterase activities detected when tested with the following non-specific substrates: p-nitrophenyl acetate, L-alanine nitroanilide, p-nitrophenyl sulfate, bis(p-nitrophenyl) phosphate, paraoxon, and p-nitrophenyl phosphate. This is Phosphotriesterase homology protein from Escherichia coli (strain K12).